A 158-amino-acid polypeptide reads, in one-letter code: Transcription elongation factor GreA (158 aa).

Residues 47–73 (AEYHAAREKQSFIEGRIQELQAKLARA) are a coiled coil.

The protein belongs to the GreA/GreB family.

Its function is as follows. Necessary for efficient RNA polymerase transcription elongation past template-encoded arresting sites. The arresting sites in DNA have the property of trapping a certain fraction of elongating RNA polymerases that pass through, resulting in locked ternary complexes. Cleavage of the nascent transcript by cleavage factors such as GreA or GreB allows the resumption of elongation from the new 3'terminus. GreA releases sequences of 2 to 3 nucleotides. This chain is Transcription elongation factor GreA, found in Thermodesulfovibrio yellowstonii (strain ATCC 51303 / DSM 11347 / YP87).